The chain runs to 901 residues: PGC-1 and ERR-induced regulator in muscle protein 1 (901 aa).

Disordered stretches follow at residues 29 to 511, 564 to 671, and 731 to 752; these read QAGL…MPAS, SLEG…MGPG, and RHQE…APPP. Polar residues predominate over residues 100–112; sequence GQQTPSTSAQSEA. Positions 157–178 are enriched in low complexity; it reads GEPAGSPESPVHSAAPQRSPGS. 5 stretches are compositionally biased toward polar residues: residues 267 to 276, 347 to 379, 387 to 418, 426 to 457, and 465 to 484; these read LSTSVSTTEQ, DESQ…QSTP, EPQS…QSTP, and EPQS…STPT. Positions 608-624 are enriched in low complexity; the sequence is PSSEEPGSGEVSGPLSP.

It is found in the cytoplasm. It localises to the nucleus. In terms of biological role, regulates the expression of selective PPARGC1A/B and ESRRA/B/G target genes with roles in glucose and lipid metabolism, energy transfer, contractile function, muscle mitochondrial biogenesis and oxidative capacity. Required for the efficient induction of MT-CO2, MT-CO3, COX4I1, TFB1M, TFB2M, POLRMT and SIRT3 by PPARGC1A. Positively regulates the PPARGC1A/ESRRG-induced expression of CKMT2, TNNI3 and SLC2A4 and negatively regulates the PPARGC1A/ESRRG-induced expression of PDK4. The polypeptide is PGC-1 and ERR-induced regulator in muscle protein 1 (PERM1) (Bos taurus (Bovine)).